Here is an 89-residue protein sequence, read N- to C-terminus: Small ribosomal subunit protein uS15 (89 aa).

This sequence belongs to the universal ribosomal protein uS15 family. Part of the 30S ribosomal subunit. Forms a bridge to the 50S subunit in the 70S ribosome, contacting the 23S rRNA.

Its function is as follows. One of the primary rRNA binding proteins, it binds directly to 16S rRNA where it helps nucleate assembly of the platform of the 30S subunit by binding and bridging several RNA helices of the 16S rRNA. In terms of biological role, forms an intersubunit bridge (bridge B4) with the 23S rRNA of the 50S subunit in the ribosome. This chain is Small ribosomal subunit protein uS15, found in Geobacillus kaustophilus (strain HTA426).